The following is a 586-amino-acid chain: Probable transporter AQR1 (586 aa).

Disordered stretches follow at residues 1–44 (MSRS…FEGA) and 61–82 (EGDLDSETSSHSSDDKVDPTQQ). The Extracellular segment spans residues 1–99 (MSRSNSIYTE…PYTLLSYGQK (99 aa)). Residues 19 to 40 (NEQHLTREYTKPDGQTKSEKLN) are compositionally biased toward basic and acidic residues. The chain crosses the membrane as a helical span at residues 100–120 (WGMVAILTMCGFWSSLGSPIY). At 121–139 (YPALRQLEKQFNVDENMVN) the chain is on the cytoplasmic side. A helical transmembrane segment spans residues 140–160 (VTVVVYLLFQGISPTVSGGLA). The Extracellular portion of the chain corresponds to 161–166 (DCFGRR). The chain crosses the membrane as a helical span at residues 167–187 (PIILAGMLIYVIASIGLACAP). Ser-188 is a topological domain (cytoplasmic). Residues 189 to 209 (YGVIIFLRCIQSIGISPTIAI) traverse the membrane as a helical segment. The Extracellular portion of the chain corresponds to 210 to 225 (SSGVVGDFTLKHERGT). The helical transmembrane segment at 226–246 (FVGATSGFVLLGQCFGSLIGA) threads the bilayer. The Cytoplasmic segment spans residues 247–255 (VLTARWDWR). A helical membrane pass occupies residues 256–276 (AIFWFLTIGCGSCFLIAFLIL). Topologically, residues 277–334 (PETKRTIAGNLSIKPKRFINRAPIFLLGPVRRRFKYDNPDYETLDPTIPKLDLSSAGK) are extracellular. A helical membrane pass occupies residues 335 to 355 (ILVLPEIILSLFPSGLLFAMW). At 356–374 (TLMLSSISSGLSVAPYNYH) the chain is on the cytoplasmic side. A helical transmembrane segment spans residues 375 to 395 (LVIIGVCYLPGGIGGLMGSFF). At 396–433 (TGRIIDMYFKRKIKKFEQDKANGLIPQDAEINMFKVRL) the chain is on the extracellular side. The helical transmembrane segment at 434–454 (VCLLPQNFLAVVAYLLFGWSI) threads the bilayer. Over 455 to 459 (DKGWR) the chain is Cytoplasmic. A helical membrane pass occupies residues 460–480 (IESILITSFVCSYCAMSTLST). Residues 481-523 (STTLLVDLYPTKSSTASSCFNFVRCSLSTIFMGCFAKMKAAMT) are Extracellular-facing. A helical membrane pass occupies residues 524-544 (VGGTFTFLCALVFFFNFLMFI). At 545-586 (PMKYGMKWREDRLLKQQRQSWLNTLAVKAKKGTKRDQNDNHN) the chain is on the cytoplasmic side.

This sequence belongs to the major facilitator superfamily. CAR1 family.

It is found in the membrane. Probable transporter that confers resistance to short-chain monocarboxylic acids and quinidine. The sequence is that of Probable transporter AQR1 (AQR1) from Saccharomyces cerevisiae (strain ATCC 204508 / S288c) (Baker's yeast).